A 436-amino-acid chain; its full sequence is 3-ketoacyl-CoA thiolase (436 aa).

Cys-99 serves as the catalytic Acyl-thioester intermediate. Catalysis depends on proton acceptor residues His-392 and Cys-422.

It belongs to the thiolase-like superfamily. Thiolase family. Heterotetramer of two alpha chains (FadJ) and two beta chains (FadI).

The protein localises to the cytoplasm. The enzyme catalyses an acyl-CoA + acetyl-CoA = a 3-oxoacyl-CoA + CoA. The protein operates within lipid metabolism; fatty acid beta-oxidation. In terms of biological role, catalyzes the final step of fatty acid oxidation in which acetyl-CoA is released and the CoA ester of a fatty acid two carbons shorter is formed. The polypeptide is 3-ketoacyl-CoA thiolase (Escherichia coli O157:H7).